The chain runs to 317 residues: Single myb histone 6 (317 aa).

An HTH myb-type domain is found at 1–61 (MGAPKQRWTS…KWRNMNVIVS (61 aa)). The H-T-H motif DNA-binding region spans 28-57 (WRTILKDPEFSSTLCYRSNVDLKDKWRNMN). Residues 121-189 (KSHRLDNIIM…KVNRKYRIAP (69 aa)) form the H15 domain. Residues 244–288 (VAAARAVAEAEAIMAEAEAAAKEAEAAEAEAQAAQAFAEAAFLTL) adopt a coiled-coil conformation.

The protein belongs to the histone H1/H5 family. SMH subfamily. Forms a homodimer and heterodimers.

The protein localises to the nucleus. Its subcellular location is the chromosome. It is found in the nucleolus. The protein resides in the telomere. Functionally, binds preferentially double-stranded telomeric repeats, but may also bind to the single telomeric strand. In Zea mays (Maize), this protein is Single myb histone 6 (SMH6).